Consider the following 364-residue polypeptide: Protein leg1a (364 aa).

Residues 1–22 (MSEMGFLRSVAAVLLLAVFSHA) form the signal peptide. An N-linked (GlcNAc...) asparagine glycan is attached at N70.

Belongs to the LEG1 family. Detected in all tissues tested, with the highest levels in serum (at protein level). At mRNA level, only expressed in liver.

The protein resides in the secreted. Functionally, important for early development of liver, exocrine pancreas and intestine, probably through cell cycle regulation. In liver, its function is partially redundant with leg1b function. The sequence is that of Protein leg1a from Danio rerio (Zebrafish).